Reading from the N-terminus, the 183-residue chain is Adenine phosphoribosyltransferase (183 aa).

This sequence belongs to the purine/pyrimidine phosphoribosyltransferase family. Homodimer.

It is found in the cytoplasm. It catalyses the reaction AMP + diphosphate = 5-phospho-alpha-D-ribose 1-diphosphate + adenine. It participates in purine metabolism; AMP biosynthesis via salvage pathway; AMP from adenine: step 1/1. In terms of biological role, catalyzes a salvage reaction resulting in the formation of AMP, that is energically less costly than de novo synthesis. This is Adenine phosphoribosyltransferase from Salmonella paratyphi C (strain RKS4594).